We begin with the raw amino-acid sequence, 388 residues long: Salivary protein Tsal2A (388 aa).

An N-terminal signal peptide occupies residues 1 to 18 (MSLLYGLLILAFTRSCLV). N-linked (GlcNAc...) asparagine glycosylation is present at N260.

The protein belongs to the DNA/RNA non-specific endonuclease family. A divalent metal cation serves as cofactor. Saliva (at protein level).

It localises to the secreted. Functionally, binds double-stranded DNA (dsDNA) with high affinity. Binds double-stranded RNA. Binds single-stranded DNA with lower affinity and with a preference for purine-rich sequences. Shows residual nuclease activity for dsDNA. Facilitates blood meal intake by lowering the local viscosity created by the release of host DNA. The chain is Salivary protein Tsal2A from Glossina morsitans morsitans (Savannah tsetse fly).